Reading from the N-terminus, the 283-residue chain is Protein FAM78A (283 aa).

This sequence belongs to the FAM78 family.

This Homo sapiens (Human) protein is Protein FAM78A (FAM78A).